A 482-amino-acid polypeptide reads, in one-letter code: Type II methyltransferase M.AvaI (482 aa).

The protein belongs to the N(4)/N(6)-methyltransferase family. N(4) subfamily.

It catalyses the reaction a 2'-deoxycytidine in DNA + S-adenosyl-L-methionine = an N(4)-methyl-2'-deoxycytidine in DNA + S-adenosyl-L-homocysteine + H(+). Its function is as follows. An alpha subtype methylase that recognizes the double-stranded sequence 5'-CYCGRG-3', methylates C-1 on both strands, and protects the DNA from cleavage by the AvaI endonuclease. The polypeptide is Type II methyltransferase M.AvaI (Anabaena variabilis).